A 320-amino-acid chain; its full sequence is Foldase protein PrsA (320 aa).

Positions 1–20 (MKMINKLIVPVTASALLLGA) are cleaved as a signal peptide. A lipid anchor (N-palmitoyl cysteine) is attached at cysteine 21. Cysteine 21 carries S-diacylglycerol cysteine lipidation. Positions 139–245 (EDSKKASHIL…FGYHIIKADK (107 aa)) constitute a PpiC domain. Positions 159 to 198 (EGLDDKEAKQKAEEIQKEVSKDPSKFGEIAKKESMDTGSA) are disordered.

It belongs to the PrsA family.

The protein resides in the cell membrane. It catalyses the reaction [protein]-peptidylproline (omega=180) = [protein]-peptidylproline (omega=0). Its function is as follows. Plays a major role in protein secretion by helping the post-translocational extracellular folding of several secreted proteins. The polypeptide is Foldase protein PrsA (Staphylococcus aureus (strain MRSA252)).